The sequence spans 388 residues: Spermosin (388 aa).

An N-terminal signal peptide occupies residues 1 to 22 (MAAINVIFISGAIALFALTGSC). A compositionally biased stretch (polar residues) spans 29 to 49 (FTNKPYATQNPYSPPQTNQPT). Residues 29 to 98 (FTNKPYATQN…SENSESENSE (70 aa)) are disordered. The span at 54–64 (QPGPAPTPAPY) shows a compositional bias: pro residues. Cystine bridges form between C116-C251, C163-C179, C265-C330, C295-C310, and C320-C349. Residues 130-372 (IVGGAEAVPN…NLEWLCCYMP (243 aa)) enclose the Peptidase S1 domain. Residues H178 and D231 each act as charge relay system in the active site. The Charge relay system role is filled by S324.

Belongs to the peptidase S1 family. As to quaternary structure, heterodimer of a heavy chain and either an L1 light chain or an L2 light chain linked by a disulfide bond. In terms of tissue distribution, detected in sperm, but not in unfertilized eggs (at protein level). Expressed in gonad, but not in hepatopancreas, intestine or branchial basket.

The protein localises to the secreted. The enzyme catalyses Hydrolyzes arginyl bonds, preferably with Pro in the P2 position.. With respect to regulation, inhibited by peptidyl-argininals with Pro in the P2 position, diisopropyl fluorophosphate, phenylmethanesulfonyl fluoride, leupeptin, antipain, soybean trypsin inhibitor, aprotinin, ovomucoid, valyl-prolyl-arginyl-chloromethane, glycyl-valyl-arginyl-chloromethane, p-aminobenzamidine, benzamidine, zinc chloride and mercuric chloride. Its function is as follows. Trypsin-like protease with a narrow substrate specificity. Preferentially hydrolyzes substrates with Pro in the P2 position and Val in the P3 position. Plays a role in fertilization. The chain is Spermosin from Halocynthia roretzi (Sea squirt).